Here is a 469-residue protein sequence, read N- to C-terminus: Phosphatidylinositol 4-kinase type 2-alpha (469 aa).

Disordered stretches follow at residues 1 to 30 (MDET…ATVP) and 50 to 72 (TATS…DQER). Residues 16–25 (EYSYQSQCSP) show a composition bias toward polar residues. A compositionally biased stretch (low complexity) spans 50–60 (TATSCGSAASG). One can recognise a PI3K/PI4K catalytic domain in the interval 115 to 443 (DILPERISQG…VQTPPVIVET (329 aa)). Residues 121–127 (ISQGSSG) are G-loop. ATP contacts are provided by residues 122–128 (SQGSSGS) and Lys143. Residues 148–150 (EPY) are important for substrate binding. The important for interaction with membranes stretch occupies residues 156-169 (KWTKWLQKLCCPCC). 4 S-palmitoyl cysteine lipidation sites follow: Cys165, Cys166, Cys168, and Cys169. 252 to 255 (QIFV) is an ATP binding site. An important for interaction with membranes region spans residues 259-267 (KDADYWLRR). The interval 296–304 (RNTDRGNDN) is catalytic loop. Residues 334-354 (AIDNGLAFPLKHPDSWRAYPF) form an activation loop region. Position 336 (Asp336) interacts with ATP. The tract at residues 349-358 (WRAYPFYWAW) is important for interaction with membranes.

This sequence belongs to the PI3/PI4-kinase family. Type II PI4K subfamily.

It localises to the golgi apparatus. The protein resides in the trans-Golgi network membrane. Its subcellular location is the membrane raft. The protein localises to the endosome. It is found in the endosome membrane. It localises to the cytoplasmic vesicle. The protein resides in the cell projection. Its subcellular location is the dendrite. The protein localises to the presynaptic cell membrane. It is found in the synapse. It localises to the synaptosome. The protein resides in the mitochondrion. Its subcellular location is the membrane. The protein localises to the cell membrane. It is found in the perikaryon. It localises to the neuron projection. It catalyses the reaction a 1,2-diacyl-sn-glycero-3-phospho-(1D-myo-inositol) + ATP = a 1,2-diacyl-sn-glycero-3-phospho-(1D-myo-inositol 4-phosphate) + ADP + H(+). Its function is as follows. Membrane-bound phosphatidylinositol-4 kinase (PI4-kinase) that catalyzes the phosphorylation of phosphatidylinositol (PI) to phosphatidylinositol 4-phosphate (PI4P), a lipid that plays important roles in endocytosis, Golgi function, protein sorting and membrane trafficking. Besides, phosphorylation of phosphatidylinositol (PI) to phosphatidylinositol 4-phosphate (PI4P) is the first committed step in the generation of phosphatidylinositol 4,5-bisphosphate (PIP2), a precursor of the second messenger inositol 1,4,5-trisphosphate (InsP3). In Xenopus laevis (African clawed frog), this protein is Phosphatidylinositol 4-kinase type 2-alpha (pi4k2a).